Consider the following 295-residue polypeptide: Protease HtpX (295 aa).

The next 2 helical transmembrane spans lie at 4–24 (ILLFLATNLAVVLIASITLSL) and 42–62 (QLLVFCAVFGFAGSLFSLFIS). Residue His-147 coordinates Zn(2+). Glu-148 is a catalytic residue. Zn(2+) is bound at residue His-151. 2 helical membrane passes run 158–178 (VTLALVQGVVNTFVMFFARII) and 199–219 (ITTIFAELVLGFLASAIVMWF). Glu-224 is a binding site for Zn(2+).

The protein belongs to the peptidase M48B family. Zn(2+) serves as cofactor.

It is found in the cell inner membrane. This chain is Protease HtpX, found in Pseudomonas savastanoi pv. phaseolicola (strain 1448A / Race 6) (Pseudomonas syringae pv. phaseolicola (strain 1448A / Race 6)).